The chain runs to 570 residues: Conserved oligomeric Golgi complex subunit 8 (570 aa).

The protein belongs to the COG8 family. Component of the conserved oligomeric Golgi complex which is composed of eight different subunits and is required for normal Golgi morphology and localization.

It is found in the golgi apparatus membrane. In terms of biological role, required for normal Golgi function. The sequence is that of Conserved oligomeric Golgi complex subunit 8 from Drosophila melanogaster (Fruit fly).